Consider the following 298-residue polypeptide: Deleted in azoospermia-like (298 aa).

Residues 1–27 form a disordered region; that stretch reads MSATTSEAPNSAVSREASTQSSSATTS. Residues 11 to 27 show a composition bias toward low complexity; sequence SAVSREASTQSSSATTS. Residues 40 to 115 form the RRM domain; sequence NTVFVGGIDV…KKLKLGPAIR (76 aa). The segment at 80–132 is homodimerization; the sequence is KGYGFVSFYNDVDVQKIVESQINFHGKKLKLGPAIRKQNLCTYHVQPRPLIFN. The DAZ domain maps to 167-190; it reads AYPPYPSSPVQVITGYQLPVYNYQ. The residue at position 276 (Y276) is a Phosphotyrosine.

This sequence belongs to the RRM DAZ family. Homodimer and heterodimer. Forms a heterodimer with DAZ. Interacts with BOLL, DAZAP1 and DAZAP2. Interacts with PUM2. Multiple DAZL RRMs can bind to a single RNA containing multiple GUU triplets. Expressed predominantly in testis with lower levels in ovary. In testis, it is expressed in pachytene spermatocytes and at lower level in type-B spermatogonia, preleptotene and zygotene spermatocytes. In ovary, it is expressed in maturing follicles. In embryonic and prepuberal ovary, it is expressed in the oocyte and follicular cells.

It is found in the cytoplasm. RNA-binding protein, which is essential for gametogenesis in both males and females. Plays a central role during spermatogenesis. Acts by binding to the 3'-UTR of mRNA, specifically recognizing GUU triplets, and thereby regulating the translation of key transcripts. This chain is Deleted in azoospermia-like (Dazl), found in Mus musculus (Mouse).